Reading from the N-terminus, the 372-residue chain is Mevalonate 3,5-bisphosphate decarboxylase (372 aa).

Belongs to the mevalonate 3,5-bisphosphate decarboxylase family. As to quaternary structure, homodimer.

It catalyses the reaction (R)-3,5-bisphosphomevalonate + H(+) = isopentenyl phosphate + phosphate + CO2. It participates in isoprenoid biosynthesis; isopentenyl diphosphate biosynthesis via mevalonate pathway. In terms of biological role, catalyzes the ATP-independent decarboxylation of (R)-mevalonate 3,5-bisphosphate to isopentenyl phosphate. Functions in an alternative mevalonate pathway, only present in extreme acidophiles of the Thermoplasmatales order, which passes through mevalonate 3-phosphate rather than mevalonate 5-phosphate. The sequence is that of Mevalonate 3,5-bisphosphate decarboxylase from Thermoplasma volcanium (strain ATCC 51530 / DSM 4299 / JCM 9571 / NBRC 15438 / GSS1).